Consider the following 339-residue polypeptide: HTH-type transcriptional regulator KdgR (339 aa).

The HTH lacI-type domain maps to T9–I64. The segment at residues I11–N30 is a DNA-binding region (H-T-H motif).

In terms of biological role, transcriptional repressor of the kdgRKAT and kduID operons for pectin utilization. The polypeptide is HTH-type transcriptional regulator KdgR (kdgR) (Bacillus subtilis (strain 168)).